A 565-amino-acid polypeptide reads, in one-letter code: Proline--tRNA ligase (565 aa).

This sequence belongs to the class-II aminoacyl-tRNA synthetase family. ProS type 1 subfamily. In terms of assembly, homodimer.

The protein resides in the cytoplasm. It carries out the reaction tRNA(Pro) + L-proline + ATP = L-prolyl-tRNA(Pro) + AMP + diphosphate. Catalyzes the attachment of proline to tRNA(Pro) in a two-step reaction: proline is first activated by ATP to form Pro-AMP and then transferred to the acceptor end of tRNA(Pro). As ProRS can inadvertently accommodate and process non-cognate amino acids such as alanine and cysteine, to avoid such errors it has two additional distinct editing activities against alanine. One activity is designated as 'pretransfer' editing and involves the tRNA(Pro)-independent hydrolysis of activated Ala-AMP. The other activity is designated 'posttransfer' editing and involves deacylation of mischarged Ala-tRNA(Pro). The misacylated Cys-tRNA(Pro) is not edited by ProRS. This Francisella tularensis subsp. novicida (strain U112) protein is Proline--tRNA ligase.